Consider the following 406-residue polypeptide: Argininosuccinate synthase (406 aa).

ATP-binding positions include 12-20 (AYSGGLDTS) and alanine 39. Residues tyrosine 90 and serine 95 each coordinate L-citrulline. An ATP-binding site is contributed by glycine 120. The L-aspartate site is built by threonine 122, asparagine 126, and aspartate 127. Residue asparagine 126 participates in L-citrulline binding. Arginine 130, serine 179, serine 188, glutamate 264, and tyrosine 276 together coordinate L-citrulline.

It belongs to the argininosuccinate synthase family. Type 1 subfamily. In terms of assembly, homotetramer.

It is found in the cytoplasm. It catalyses the reaction L-citrulline + L-aspartate + ATP = 2-(N(omega)-L-arginino)succinate + AMP + diphosphate + H(+). The protein operates within amino-acid biosynthesis; L-arginine biosynthesis; L-arginine from L-ornithine and carbamoyl phosphate: step 2/3. This Geotalea uraniireducens (strain Rf4) (Geobacter uraniireducens) protein is Argininosuccinate synthase.